The primary structure comprises 352 residues: F-box/kelch-repeat protein At1g57790 (352 aa).

One can recognise an F-box domain in the interval 10 to 56 (KNLWKDLPLELLSSVMTFLEIKDNVRASVVCKSWFEAAVSVRVIDKS). 2 Kelch repeats span residues 148 to 189 (VVFT…HNNV) and 190 to 234 (VFSN…WNEG).

This chain is F-box/kelch-repeat protein At1g57790, found in Arabidopsis thaliana (Mouse-ear cress).